The chain runs to 170 residues: Protein FAM209 (170 aa).

A signal peptide spans 1–20; that stretch reads MRTLLRWCLFLSLCVSCACA. The chain crosses the membrane as a helical span at residues 56 to 76; the sequence is WLGNKWLWLFVAIMIYVMLKF. Residues 83–107 are disordered; the sequence is KEQHPPGLRGCQLRSPPKKAQNISP.

Interacts with DPY19L2. Interacts with CYLC1; the interaction may be relevant for proper acrosome attachment to the nuclear envelope. As to expression, predominately expressed in testis.

The protein localises to the nucleus inner membrane. Functionally, required for sperm acrosome biogenesis. The protein is Protein FAM209 of Mus musculus (Mouse).